A 431-amino-acid polypeptide reads, in one-letter code: MRLMTKLGFRALVASCLIAAGGAANAQVNVLITGVGSTQFPIATANFANEAGLPQQVTSIVRADLARSGKFTNIDAGSTPVPETASVDLGAWKAKGANAFVAGSVNREANGQYKVNFILYDTVKQQSLGGLSLTATDTTLRTAGHKIADYIYQKLLGVRGVFATRLSYVIKTGNRYQLQISDSDGQNARIALSSTEPIISPAWSPSGTKVAYVSFERKKPIVYIHDLPTGRRYMVSDQKGNNSAPAWSPDSNTLAVALSLTGNTQIYTVNANGGGLRRLTQSSSIDTEPYYSPDGRWIYFTSDRGGAPQIYRMPAQGESAGAAQRVTFTGSYNTSPRISPDGKLLAYISRTGGGFKLYVQDLQTGAANAITNTNRDESPSFAANGQYLLYATQSGGRNVLAAVPSDGSAPPQILSVQGGSVREPSWGPFMQ.

Positions 1–26 (MRLMTKLGFRALVASCLIAAGGAANA) are cleaved as a signal peptide. The interval 411–431 (PQILSVQGGSVREPSWGPFMQ) is disordered.

This sequence belongs to the TolB family. In terms of assembly, the Tol-Pal system is composed of five core proteins: the inner membrane proteins TolA, TolQ and TolR, the periplasmic protein TolB and the outer membrane protein Pal. They form a network linking the inner and outer membranes and the peptidoglycan layer.

Its subcellular location is the periplasm. Functionally, part of the Tol-Pal system, which plays a role in outer membrane invagination during cell division and is important for maintaining outer membrane integrity. This chain is Tol-Pal system protein TolB, found in Burkholderia ambifaria (strain MC40-6).